Here is a 527-residue protein sequence, read N- to C-terminus: Bifunctional pantoate ligase/cytidylate kinase (527 aa).

A pantoate--beta-alanine ligase region spans residues 1–277 (MRQLISPEAL…VGTARLIDNL (277 aa)). An ATP-binding site is contributed by 27 to 34 (MGALHAGH). Histidine 34 (proton donor) is an active-site residue. Glutamine 58 lines the (R)-pantoate pocket. Residue glutamine 58 coordinates beta-alanine. An ATP-binding site is contributed by 147–150 (GEKD). Glutamine 153 serves as a coordination point for (R)-pantoate. Residues valine 176 and 184–187 (LSSR) contribute to the ATP site. Residues 278–527 (TLQGRRPIIA…GQTPSPLSLG (250 aa)) are cytidylate kinase. Residues 507-527 (GLGDSSPQATPGQTPSPLSLG) form a disordered region. A compositionally biased stretch (polar residues) spans 511 to 527 (SSPQATPGQTPSPLSLG).

The protein in the N-terminal section; belongs to the pantothenate synthetase family. This sequence in the C-terminal section; belongs to the cytidylate kinase family. Type 1 subfamily.

It is found in the cytoplasm. The enzyme catalyses (R)-pantoate + beta-alanine + ATP = (R)-pantothenate + AMP + diphosphate + H(+). The catalysed reaction is CMP + ATP = CDP + ADP. It catalyses the reaction dCMP + ATP = dCDP + ADP. The protein operates within cofactor biosynthesis; (R)-pantothenate biosynthesis; (R)-pantothenate from (R)-pantoate and beta-alanine: step 1/1. In terms of biological role, catalyzes the condensation of pantoate with beta-alanine in an ATP-dependent reaction via a pantoyl-adenylate intermediate. Catalyzes the transfer of a phosphate group from ATP to either CMP or dCMP to form CDP or dCDP and ADP, respectively. This is Bifunctional pantoate ligase/cytidylate kinase from Synechococcus elongatus (strain ATCC 33912 / PCC 7942 / FACHB-805) (Anacystis nidulans R2).